Here is a 68-residue protein sequence, read N- to C-terminus: Protein transport protein Sec61 gamma-1 subunit (68 aa).

Over 1–32 (MDKVVKFAEPGRAFAKDSIRLVKRCTKPDRKE) the chain is Cytoplasmic. A helical transmembrane segment spans residues 33–61 (FQKIAIATAVGFAIMGFIGFFVKLIHIPI). The Extracellular portion of the chain corresponds to 62–68 (NNIIVGS).

This sequence belongs to the SecE/SEC61-gamma family. Heterotrimeric complex composed of SEC61-alpha, SEC61-beta and SEC61-gamma.

It localises to the endoplasmic reticulum membrane. Functionally, necessary for protein translocation in the endoplasmic reticulum. This Drosophila melanogaster (Fruit fly) protein is Protein transport protein Sec61 gamma-1 subunit (SEC61G1).